The following is a 164-amino-acid chain: uncharacterized protein (164 aa).

A helical transmembrane segment spans residues 46 to 66; that stretch reads FIRPNIYLIIFIIIVLLLLYY. A coiled-coil region spans residues 72 to 137; that stretch reads KADKEKEKLE…YNLNKENLRE (66 aa). Basic and acidic residues predominate over residues 76 to 91; the sequence is EKEKLEDTDKEFDKST. The segment at 76 to 114 is disordered; sequence EKEKLEDTDKEFDKSTNNDTNSKKIYHRQKNSKTLNSSK.

The protein resides in the membrane. This is an uncharacterized protein from Acanthamoeba polyphaga mimivirus (APMV).